Here is a 134-residue protein sequence, read N- to C-terminus: ATP synthase epsilon chain (134 aa).

The protein belongs to the ATPase epsilon chain family. F-type ATPases have 2 components, CF(1) - the catalytic core - and CF(0) - the membrane proton channel. CF(1) has five subunits: alpha(3), beta(3), gamma(1), delta(1), epsilon(1). CF(0) has three main subunits: a, b and c.

Its subcellular location is the cell membrane. Its function is as follows. Produces ATP from ADP in the presence of a proton gradient across the membrane. The protein is ATP synthase epsilon chain of Alkaliphilus oremlandii (strain OhILAs) (Clostridium oremlandii (strain OhILAs)).